Here is a 315-residue protein sequence, read N- to C-terminus: Ferrochelatase (315 aa).

Fe cation-binding residues include His193 and Glu273.

It belongs to the ferrochelatase family.

The protein resides in the cytoplasm. It catalyses the reaction heme b + 2 H(+) = protoporphyrin IX + Fe(2+). It functions in the pathway porphyrin-containing compound metabolism; protoheme biosynthesis; protoheme from protoporphyrin-IX: step 1/1. In terms of biological role, catalyzes the ferrous insertion into protoporphyrin IX. In Wolbachia sp. subsp. Drosophila simulans (strain wRi), this protein is Ferrochelatase.